Here is a 341-residue protein sequence, read N- to C-terminus: MALPAIPQPLLTPLTEAAIFLVFTIDEGGEQAVHDVLADISGLQRSIGFRVPAGGLAAVVGIGSDAWDRLFEGPRPAELHPFVELTGDKHHAPRTPGDLLFHIRARQMDLCFEFATVVTNRLAGAASVIDEVHGFKYFEQRDLMGFVDGTENPSGQAAYVAVTVGDEDPDFAGSSYVIVQKYLHDMSEWNSLPVEEQENVIGRSKLEDLEMDDDTKPANSHTALTVIEDESGEQIQILRDNMPFGHVGSAEMGTYFIGYSASPTVTEQMLTNMFIGNPVGNYDRILDFSTAVTGINFFVPTADFLDDPPDAPTRLVPEATFTAPISDGSLGIGSLKRSAQQ.

D148 acts as the Proton acceptor in catalysis. H221 serves as a coordination point for heme. Residues 304–341 (FLDDPPDAPTRLVPEATFTAPISDGSLGIGSLKRSAQQ) form a targeting peptide region.

The protein belongs to the DyP-type peroxidase family. In terms of assembly, homohexamer. It depends on heme b as a cofactor.

It localises to the encapsulin nanocompartment. Its function is as follows. Cargo protein of a type 1 encapsulin nanocompartment. Has both general peroxidase activity and dye-decolorizing activity. Can catalyze the oxidation of both protoporphyrinogen IX and coproporphyrinogen III to their corresponding porphyrins. Also efficiently decolorizes the dyes alizarin red and Cibacron blue F3GA. This cargo-loaded encapsulin nanocompartment is probably involved in protection against oxidative damage. The polypeptide is Dye-decolorizing peroxidase (Rhodococcus erythropolis (strain PR4 / NBRC 100887)).